Here is a 58-residue protein sequence, read N- to C-terminus: Putative calcium channel toxin 196 (58 aa).

Positions 1-16 (GSLLLVLFLLSVICYA) are cleaved as a signal peptide. A propeptide spanning residues 17–26 (EIAAGPTKCQ) is cleaved from the precursor. 3 disulfides stabilise this stretch: cysteine 25–cysteine 38, cysteine 31–cysteine 43, and cysteine 37–cysteine 52.

Belongs to the scorpion calcin-like family. KTX subfamily. As to expression, expressed by the venom gland.

The protein resides in the secreted. Functionally, may inhibit voltage-gated potassium channels Kv1.1/KCNA1, hKv1.2/KCNA2, and Kv1.3/KCNA3. May also increase intracellular calcium release through the activation of nuclear inositol 1,4,5-trisphosphate receptors (ITPR) of cardiomyocytes, thereby causing an increase in the contraction frequency of these cells. The protein is Putative calcium channel toxin 196 of Lychas mucronatus (Chinese swimming scorpion).